Here is a 191-residue protein sequence, read N- to C-terminus: Xanthine phosphoribosyltransferase (191 aa).

Positions 20 and 27 each coordinate xanthine. Position 128–132 (128–132 (ANGQA)) interacts with 5-phospho-alpha-D-ribose 1-diphosphate. K156 contacts xanthine.

This sequence belongs to the purine/pyrimidine phosphoribosyltransferase family. Xpt subfamily. As to quaternary structure, homodimer.

The protein resides in the cytoplasm. The catalysed reaction is XMP + diphosphate = xanthine + 5-phospho-alpha-D-ribose 1-diphosphate. Its pathway is purine metabolism; XMP biosynthesis via salvage pathway; XMP from xanthine: step 1/1. Functionally, converts the preformed base xanthine, a product of nucleic acid breakdown, to xanthosine 5'-monophosphate (XMP), so it can be reused for RNA or DNA synthesis. In Limosilactobacillus reuteri (strain DSM 20016) (Lactobacillus reuteri), this protein is Xanthine phosphoribosyltransferase.